Consider the following 1138-residue polypeptide: Ras guanine nucleotide exchange factor N (1138 aa).

3 LRR repeats span residues 1–16 (MSYN…ITQL), 18–39 (HLKS…SYFG), and 43–64 (TLQK…FYLL). Disordered regions lie at residues 126 to 180 (ALKN…SNNN), 239 to 301 (FNSE…GSRK), 319 to 360 (NKTH…SDTN), 389 to 411 (IDSP…SPPQ), 473 to 540 (GSPT…NNNN), 601 to 643 (ATTV…TSGS), and 660 to 680 (MSDV…SQSG). Residues 140-158 (KTKGLHSSSSNINTSNNIT) show a composition bias toward low complexity. Residues 263-275 (RAQTISGKQPSII) are compositionally biased toward polar residues. Residues 283–299 (SGGGSGNNNNSGGGGGS) are compositionally biased toward gly residues. Residues 326–352 (GHSSSSQSNSTTNTPSISSTPYPTSTI) are compositionally biased toward low complexity. Residues 393–405 (RTLERRNSSRDDI) show a composition bias toward basic and acidic residues. Residues 487-496 (PQHPPPPPPI) are compositionally biased toward pro residues. The segment covering 498–511 (DNNQPKLNQSQNLI) has biased composition (polar residues). 2 stretches are compositionally biased toward low complexity: residues 512–540 (NTNS…NNNN) and 605–634 (NSNS…NSPQ). Residues 733–855 (GVPKVKNITL…LLLNIINMKR (123 aa)) form the N-terminal Ras-GEF domain. Residues 891–1118 (RPHEIARQLT…YSEASKIEEK (228 aa)) form the Ras-GEF domain.

In terms of biological role, promotes the exchange of Ras-bound GDP by GTP. May play a role in chemotaxis. This Dictyostelium discoideum (Social amoeba) protein is Ras guanine nucleotide exchange factor N (gefN).